A 443-amino-acid polypeptide reads, in one-letter code: Threonine/serine transporter TdcC (443 aa).

The next 11 membrane-spanning stretches (helical) occupy residues 22 to 42 (TTWT…FFPI), 44 to 64 (AGFG…PIAF), 97 to 117 (GVVI…IYGV), 140 to 160 (FVAL…KDLM), 163 to 183 (VMSY…LSLI), 207 to 227 (ILIT…FSPI), 261 to 281 (MLMV…LSPA), 311 to 331 (FAIT…FKSF), 366 to 386 (LSMI…PNIL), 389 to 409 (IEAM…MYAI), and 423 to 443 (DNVF…YKLF).

The protein belongs to the amino acid/polyamine transporter 2 family. SdaC/TdcC subfamily.

It is found in the cell inner membrane. The enzyme catalyses L-threonine(in) + H(+)(in) = L-threonine(out) + H(+)(out). It catalyses the reaction L-serine(in) + H(+)(in) = L-serine(out) + H(+)(out). In terms of biological role, involved in the import of threonine and serine into the cell, with the concomitant import of a proton (symport system). The sequence is that of Threonine/serine transporter TdcC from Shigella flexneri serotype 5b (strain 8401).